We begin with the raw amino-acid sequence, 286 residues long: UPF0173 metal-dependent hydrolase RALTA_A1748 (286 aa).

Belongs to the UPF0173 family.

The sequence is that of UPF0173 metal-dependent hydrolase RALTA_A1748 from Cupriavidus taiwanensis (strain DSM 17343 / BCRC 17206 / CCUG 44338 / CIP 107171 / LMG 19424 / R1) (Ralstonia taiwanensis (strain LMG 19424)).